A 1480-amino-acid chain; its full sequence is Nonribosomal peptide synthetase-like enzyme fsqF (1480 aa).

Positions 31–59 are disordered; the sequence is SPFADEPSIDVPSTHLPVVTPRSKTANDR. The interval 132 to 527 is adenylation domain; the sequence is DSARATPHAP…VGRTDDQVKY (396 aa). In terms of domain architecture, Carrier spans 662–741; that stretch reads STARTIAREY…SIASLIDANS (80 aa). Position 700 is an O-(pantetheine 4'-phosphoryl)serine (S700). Residues 739 to 754 are compositionally biased toward polar residues; it reads ANSSPGRGQPLNTQET. The disordered stretch occupies residues 739–773; the sequence is ANSSPGRGQPLNTQETARLPLRSNGPAPSQQALER. The NAD-binding domain stretch occupies residues 780–1003; it reads LTGASGFLGI…ACVELGFYNG (224 aa). The aminotransferase domain stretch occupies residues 1100–1465; sequence NAAGTVVHRE…YNTVAEVQEF (366 aa).

It belongs to the NRP synthetase family.

The protein operates within secondary metabolite biosynthesis. In terms of biological role, nonribosomal peptide synthetase-like enzyme; part of the gene cluster that mediates the biosynthesis of the isoquinoline alkaloids fumisoquin A, fumisoquin B and fumisoquin C; as well as small amounts of fumipyrrole as a shunt metabolite. The products of the cluster lead to a brown coloration and are important for growth and conidiation. The nonribosomal peptide synthetase-like protein fsqF, which lacks a canonical condensation domain, is required for addition of a serine-derived dehydroalanine moiety to activated tyrosine but is not essential for the subsequent steps leading to isoquinoline formation. A different enzyme, most likely the ATP-grasp enzyme fsqD, is responsible for activation of tyrosine. Three additional enzymes encoded by the fsq cluster, the N-methyltransferase fsqC, the phenol 2-monooxygenase fsqG and the FAD-dependent oxidase fsqB, catalyze the formation of the isoquinoline ring system in the fumisoquins. FsqB converts the fspF thiolation domain-bound (2S,4S,5S)-2-amino-6-(3,4-dihydroxyphenyl)-4-hydroxy-5-(methylamino)hexanoyl into isoquinoline. The cyclization most likely proceeds via a two-step mechanism, beginning with FAD-dependent oxidation of the methyl group to an iminium species followed by electrophilic attack on the deprotonated phenol. The protein is Nonribosomal peptide synthetase-like enzyme fsqF of Aspergillus fumigatus (strain ATCC MYA-4609 / CBS 101355 / FGSC A1100 / Af293) (Neosartorya fumigata).